Consider the following 320-residue polypeptide: uncharacterized protein (320 aa).

Residue 46 to 53 (DVPGVGKT) coordinates ATP.

Belongs to the MoxR family.

This is an uncharacterized protein from Bacillus subtilis (strain 168).